A 216-amino-acid polypeptide reads, in one-letter code: Minor fimbrial subunit HifD (216 aa).

The signal sequence occupies residues 1–19 (MQKTPKKLTALCHQQSTAS). Residue Cys-20 is the site of N-palmitoyl cysteine attachment. Cys-20 is lipidated: S-diacylglycerol cysteine. The segment at 159 to 180 (PINVDGSQANSEKAPDTGKEQN) is disordered.

This sequence belongs to the fimbrial protein family.

Its subcellular location is the cell membrane. It localises to the fimbrium. May be a minor structural protein required for pilus biogenesis. In Haemophilus influenzae, this protein is Minor fimbrial subunit HifD (hifD).